A 419-amino-acid polypeptide reads, in one-letter code: Transcription termination factor Rho (419 aa).

Residues 48-123 (EISGDGVLEI…LKVDTINFDR (76 aa)) enclose the Rho RNA-BD domain. RNA-binding regions lie at residues 61 to 66 (GFGFLR), 78 to 80 (DIY), and 108 to 110 (ERY). Residues 169-174 (GKGQRG), 181-186 (KAGKTI), and arginine 212 each bind ATP. The RNA-binding 2 stretch occupies residues 284–288 (VLTGG).

Belongs to the Rho family. In terms of assembly, homohexamer. The homohexamer assembles into an open ring structure.

In terms of biological role, facilitates transcription termination by a mechanism that involves Rho binding to the nascent RNA, activation of Rho's RNA-dependent ATPase activity, and release of the mRNA from the DNA template. The chain is Transcription termination factor Rho from Pseudomonas fluorescens biotype C.